A 347-amino-acid polypeptide reads, in one-letter code: MDVLGAAALALFLVPLLIVAEQGRTWGWGSPAALALFALGAAGLAVFIPVELRRGDEAILPLGLFRRGSIALCSAVNFTIGVGIFGTVTTLPLFLQMVQGRTPTQAGLVVIPFMLGTIASQMVSGKLIASSGRFKKLAIVGLGSMAGALLAMATTGATTPMWGIVLIVLWLGVGIGLSQTVITSPMQNSAPKSQLGVANGASACAGQIGGSTGIAVLFSVMFAVALGRLADLLHTPRYERLLTDPAITGDPANHRFLDMAESGQGAGINLDDTSLLNGIDARLMQPVTDSFAHGFHIMFLPGGVVLLAGFVMTWFLRELQEETAPEEERPAESGAGAKNGPLPASDA.

Transmembrane regions (helical) follow at residues 3–20 (VLGAAALALFLVPLLIVA), 30–52 (SPAALALFALGAAGLAVFIPVEL), 73–95 (CSAVNFTIGVGIFGTVTTLPLFL), 108–130 (LVVIPFMLGTIASQMVSGKLIAS), 137–156 (LAIVGLGSMAGALLAMATTG), 161–183 (MWGIVLIVLWLGVGIGLSQTVIT), 204–226 (CAGQIGGSTGIAVLFSVMFAVAL), and 294–316 (GFHIMFLPGGVVLLAGFVMTWFL). Residues 321 to 347 (EETAPEEERPAESGAGAKNGPLPASDA) are disordered.

This sequence belongs to the major facilitator superfamily. TCR/Tet family.

Its subcellular location is the cell membrane. Its function is as follows. Resistance to tetracycline by an active tetracycline efflux. This is an energy-dependent process that decreases the accumulation of the antibiotic in whole cells. This protein functions as a metal-tetracycline/H(+) antiporter. The sequence is that of Tetracycline resistance determinant (tetB) from Streptomyces rimosus.